A 405-amino-acid polypeptide reads, in one-letter code: uncharacterized protein (405 aa).

Belongs to the UDP-glycosyltransferase family.

This is an uncharacterized protein from Bacillus subtilis (strain 168).